We begin with the raw amino-acid sequence, 99 residues long: Protein Tat (99 aa).

Positions 1-24 (MDPVDPKLEPWNHPGSQPQTACNN) are interaction with human CREBBP. The segment at 1-48 (MDPVDPKLEPWNHPGSQPQTACNNCYCKKCCYHCQMCFLKKGLGISYG) is transactivation. Residues Cys22, Cys25, and Cys27 each coordinate Zn(2+). A cysteine-rich region spans residues 22–37 (CNNCYCKKCCYHCQMC). Position 28 is an N6-acetyllysine; by host PCAF (Lys28). Cys30, His33, Cys34, and Cys37 together coordinate Zn(2+). The segment at 38 to 48 (FLKKGLGISYG) is core. Residues 48-58 (GRKKRSQRHRT) are compositionally biased toward basic residues. The tract at residues 48 to 99 (GRKKRSQRHRTPASLQDHQNSISKQPLSRTHGDPTGPKEQKKEVASKTETDP) is disordered. Residues 49 to 57 (RKKRSQRHR) carry the Nuclear localization signal, RNA-binding (TAR), and protein transduction motif. The tract at residues 49–86 (RKKRSQRHRTPASLQDHQNSISKQPLSRTHGDPTGPKE) is interaction with the host capping enzyme RNGTT. N6-acetyllysine; by host EP300 and GCN5L2 is present on residues Lys50 and Lys51. Arg52 is modified (asymmetric dimethylarginine; by host PRMT6). Residues 60 to 75 (ASLQDHQNSISKQPLS) are compositionally biased toward polar residues. A Glycyl lysine isopeptide (Lys-Gly) (interchain with G-Cter in ubiquitin) cross-link involves residue Lys71. Over residues 77–99 (THGDPTGPKEQKKEVASKTETDP) the composition is skewed to basic and acidic residues.

The protein belongs to the lentiviruses Tat family. Interacts with host CCNT1. Associates with the P-TEFb complex composed at least of Tat, P-TEFb (CDK9 and CCNT1), TAR RNA, RNA Pol II. Recruits the HATs CREBBP, TAF1/TFIID, EP300, PCAF and GCN5L2. Interacts with host KAT5/Tip60; this interaction targets the latter to degradation. Interacts with the host deacetylase SIRT1. Interacts with host capping enzyme RNGTT; this interaction stimulates RNGTT. Binds to host KDR, and to the host integrins ITGAV/ITGB3 and ITGA5/ITGB1. Interacts with host KPNB1/importin beta-1 without previous binding to KPNA1/importin alpha-1. Interacts with EIF2AK2. Interacts with host nucleosome assembly protein NAP1L1; this interaction may be required for the transport of Tat within the nucleus, since the two proteins interact at the nuclear rim. Interacts with host C1QBP/SF2P32; this interaction involves lysine-acetylated Tat. Interacts with the host chemokine receptors CCR2, CCR3 and CXCR4. Interacts with host DPP4/CD26; this interaction may trigger an anti-proliferative effect. Interacts with host LDLR. Interacts with the host extracellular matrix metalloproteinase MMP1. Interacts with host PRMT6; this interaction mediates Tat's methylation. Interacts with, and is ubiquitinated by MDM2/Hdm2. Interacts with host PSMC3 and HTATIP2. Interacts with STAB1; this interaction may overcome SATB1-mediated repression of IL2 and IL2RA (interleukin) in T cells by binding to the same domain than HDAC1. Interacts (when acetylated) with human CDK13, thereby increasing HIV-1 mRNA splicing and promoting the production of the doubly spliced HIV-1 protein Nef. Interacts with host TBP; this interaction modulates the activity of transcriptional pre-initiation complex. Interacts with host RELA. Interacts with host PLSCR1; this interaction negatively regulates Tat transactivation activity by altering its subcellular distribution. Asymmetrical arginine methylation by host PRMT6 seems to diminish the transactivation capacity of Tat and affects the interaction with host CCNT1. In terms of processing, acetylation by EP300, CREBBP, GCN5L2/GCN5 and PCAF regulates the transactivation activity of Tat. EP300-mediated acetylation of Lys-50 promotes dissociation of Tat from the TAR RNA through the competitive binding to PCAF's bromodomain. In addition, the non-acetylated Tat's N-terminus can also interact with PCAF. PCAF-mediated acetylation of Lys-28 enhances Tat's binding to CCNT1. Lys-50 is deacetylated by SIRT1. Post-translationally, polyubiquitination by host MDM2 does not target Tat to degradation, but activates its transactivation function and fosters interaction with CCNT1 and TAR RNA. Phosphorylated by EIF2AK2 on serine and threonine residues adjacent to the basic region important for TAR RNA binding and function. Phosphorylation of Tat by EIF2AK2 is dependent on the prior activation of EIF2AK2 by dsRNA.

Its subcellular location is the host nucleus. It is found in the host nucleolus. The protein localises to the host cytoplasm. The protein resides in the secreted. Transcriptional activator that increases RNA Pol II processivity, thereby increasing the level of full-length viral transcripts. Recognizes a hairpin structure at the 5'-LTR of the nascent viral mRNAs referred to as the transactivation responsive RNA element (TAR) and recruits the cyclin T1-CDK9 complex (P-TEFb complex) that will in turn hyperphosphorylate the RNA polymerase II to allow efficient elongation. The CDK9 component of P-TEFb and other Tat-activated kinases hyperphosphorylate the C-terminus of RNA Pol II that becomes stabilized and much more processive. Other factors such as HTATSF1/Tat-SF1, SUPT5H/SPT5, and HTATIP2 are also important for Tat's function. Besides its effect on RNA Pol II processivity, Tat induces chromatin remodeling of proviral genes by recruiting the histone acetyltransferases (HATs) CREBBP, EP300 and PCAF to the chromatin. This also contributes to the increase in proviral transcription rate, especially when the provirus integrates in transcriptionally silent region of the host genome. To ensure maximal activation of the LTR, Tat mediates nuclear translocation of NF-kappa-B by interacting with host RELA. Through its interaction with host TBP, Tat may also modulate transcription initiation. Tat can reactivate a latently infected cell by penetrating in it and transactivating its LTR promoter. In the cytoplasm, Tat is thought to act as a translational activator of HIV-1 mRNAs. Its function is as follows. Extracellular circulating Tat can be endocytosed by surrounding uninfected cells via the binding to several surface receptors such as CD26, CXCR4, heparan sulfate proteoglycans (HSPG) or LDLR. Neurons are rarely infected, but they internalize Tat via their LDLR. Through its interaction with nuclear HATs, Tat is potentially able to control the acetylation-dependent cellular gene expression. Modulates the expression of many cellular genes involved in cell survival, proliferation or in coding for cytokines or cytokine receptors. Tat plays a role in T-cell and neurons apoptosis. Tat induced neurotoxicity and apoptosis probably contribute to neuroAIDS. Circulating Tat also acts as a chemokine-like and/or growth factor-like molecule that binds to specific receptors on the surface of the cells, affecting many cellular pathways. In the vascular system, Tat binds to ITGAV/ITGB3 and ITGA5/ITGB1 integrins dimers at the surface of endothelial cells and competes with bFGF for heparin-binding sites, leading to an excess of soluble bFGF. In Homo sapiens (Human), this protein is Protein Tat.